The chain runs to 309 residues: tRNA pseudouridine synthase B (309 aa).

Asp-39 (nucleophile) is an active-site residue. Positions 229–306 constitute a PUA domain; sequence LPRVVVHQES…ERVLTLRKVF (78 aa).

It belongs to the pseudouridine synthase TruB family. Type 1 subfamily.

It catalyses the reaction uridine(55) in tRNA = pseudouridine(55) in tRNA. Its function is as follows. Responsible for synthesis of pseudouridine from uracil-55 in the psi GC loop of transfer RNAs. The chain is tRNA pseudouridine synthase B from Thermotoga petrophila (strain ATCC BAA-488 / DSM 13995 / JCM 10881 / RKU-1).